The sequence spans 391 residues: Somatostatin receptor type 1 (391 aa).

Positions 1-50 (MFPNGTAPSPTSSPSSSPGGCGEGVCSRGPGSGAADGMEEPGRNSSQNGT) are disordered. Over 1–56 (MFPNGTAPSPTSSPSSSPGGCGEGVCSRGPGSGAADGMEEPGRNSSQNGTLSEGQG) the chain is Extracellular. An N-linked (GlcNAc...) asparagine glycan is attached at Asn4. The segment covering 8–18 (PSPTSSPSSSP) has biased composition (low complexity). 2 N-linked (GlcNAc...) asparagine glycosylation sites follow: Asn44 and Asn48. A helical membrane pass occupies residues 57 to 84 (SAILISFIYSVVCLVGLCGNSMVIYVIL). At 85–94 (RYAKMKTATN) the chain is on the cytoplasmic side. Residues 95–120 (IYILNLAIADELLMLSVPFLVTSTLL) traverse the membrane as a helical segment. At 121–131 (RHWPFGALLCR) the chain is on the extracellular side. Cys130 and Cys208 form a disulfide bridge. A helical membrane pass occupies residues 132-153 (LVLSVDAVNMFTSIYCLTVLSV). Residues 154 to 175 (DRYVAVVHPIKAARYRRPTVAK) are Cytoplasmic-facing. Residues 176–196 (VVNLGVWVLSLLVILPIVVFS) traverse the membrane as a helical segment. The Extracellular portion of the chain corresponds to 197–219 (RTAANSDGTVACNMLMPEPAQRW). The helical transmembrane segment at 220 to 244 (LVGFVLYTFLMGFLLPVGAICLCYV) threads the bilayer. Residues 245-270 (LIIAKMRMVALKAGWQQRKRSERKIT) lie on the Cytoplasmic side of the membrane. The helical transmembrane segment at 271–296 (LMVMMVVMVFVICWMPFYVVQLVNVF) threads the bilayer. Residues 297–303 (AEQDDAT) are Extracellular-facing. Residues 304–327 (VSQLSVILGYANSCANPILYGFLS) form a helical membrane-spanning segment. At 328-391 (DNFKRSFQRI…GTCASRISTL (64 aa)) the chain is on the cytoplasmic side. Cys339 is lipidated: S-palmitoyl cysteine.

This sequence belongs to the G-protein coupled receptor 1 family. Brain, pituitary, islet, jejunum, stomach, heart, spleen.

The protein resides in the cell membrane. Receptor for somatostatin with higher affinity for somatostatin-14 than -28. This receptor is coupled to phosphotyrosine phosphatase and Na(+)/H(+) exchanger via pertussis toxin insensitive G proteins. In Rattus norvegicus (Rat), this protein is Somatostatin receptor type 1 (Sstr1).